The primary structure comprises 442 residues: MSERKYFGTDGVRAVAGEFPLTSAWVMSLGAAAGEVLRRVNPHARVVIGKDTRQSGDMLEAALAAGLTSRGVTVIHVGVLPTPGVSYLTRHLKADAGVVISASHNPYEDNGIKFFGADGQKLSDATELQIEAAIDEVPGFAPLTGTAMGSVTNYTEAEHLYTDFLKSHAPDLSGLKIALDCANGAAYRVAPKVFQAAGADVFAIYTTPDGRNINRGCGSTHMDHLRQIVREGEYDLGVAFDGDADRALFVDSRGQVVHGDHMLLLNARARGEQAVVATIMTNMALEAKLQDAGIPLERTAVGDRYVHERLHEKGLSLGGEQSGHVLFLDISPTGDGVLTALLTLASMKKLGTTLDALHDDLVMYPQTLVNVRVQDKKAIAVDQQVQQAVRQAEEQLLGRGRVNLRPSGTENLIRVMVEGQDAAEIHEVARVLAGVVEARGQA.

Residue Ser-103 is the Phosphoserine intermediate of the active site. Mg(2+) is bound by residues Ser-103, Asp-241, Asp-243, and Asp-245. Phosphoserine is present on Ser-103.

It belongs to the phosphohexose mutase family. It depends on Mg(2+) as a cofactor. Activated by phosphorylation.

The catalysed reaction is alpha-D-glucosamine 1-phosphate = D-glucosamine 6-phosphate. In terms of biological role, catalyzes the conversion of glucosamine-6-phosphate to glucosamine-1-phosphate. The sequence is that of Phosphoglucosamine mutase from Deinococcus deserti (strain DSM 17065 / CIP 109153 / LMG 22923 / VCD115).